Here is a 231-residue protein sequence, read N- to C-terminus: LexA repressor (231 aa).

The segment at residues 26–46 is a DNA-binding region (H-T-H motif); sequence FDEMKDALDLRSKSGIHRLIT. Catalysis depends on for autocatalytic cleavage activity residues serine 152 and lysine 190.

Belongs to the peptidase S24 family. In terms of assembly, homodimer.

The enzyme catalyses Hydrolysis of Ala-|-Gly bond in repressor LexA.. In terms of biological role, represses a number of genes involved in the response to DNA damage (SOS response), including recA and lexA. In the presence of single-stranded DNA, RecA interacts with LexA causing an autocatalytic cleavage which disrupts the DNA-binding part of LexA, leading to derepression of the SOS regulon and eventually DNA repair. This chain is LexA repressor, found in Bradyrhizobium diazoefficiens (strain JCM 10833 / BCRC 13528 / IAM 13628 / NBRC 14792 / USDA 110).